A 240-amino-acid polypeptide reads, in one-letter code: Ribonuclease 3 (240 aa).

The 133-residue stretch at 9-141 folds into the RNase III domain; the sequence is VEEFQKKTGI…LLAAIYLDQG (133 aa). Position 54 (E54) interacts with Mg(2+). Residue D58 is part of the active site. 2 residues coordinate Mg(2+): D127 and E130. Residue E130 is part of the active site. The region spanning 168-237 is the DRBM domain; the sequence is DYKTALQEIV…ARIAYEKLLK (70 aa).

Belongs to the ribonuclease III family. Homodimer. The cofactor is Mg(2+).

The protein localises to the cytoplasm. The enzyme catalyses Endonucleolytic cleavage to 5'-phosphomonoester.. In terms of biological role, digests double-stranded RNA. Involved in the processing of primary rRNA transcript to yield the immediate precursors to the large and small rRNAs (23S and 16S). Processes some mRNAs, and tRNAs when they are encoded in the rRNA operon. Processes pre-crRNA and tracrRNA of type II CRISPR loci if present in the organism. The chain is Ribonuclease 3 from Thermotoga petrophila (strain ATCC BAA-488 / DSM 13995 / JCM 10881 / RKU-1).